Reading from the N-terminus, the 235-residue chain is Ribosomal RNA small subunit methyltransferase G (235 aa).

S-adenosyl-L-methionine-binding positions include glycine 74, phenylalanine 79, 97–99 (EAT), 125–126 (AE), and arginine 144.

Belongs to the methyltransferase superfamily. RNA methyltransferase RsmG family.

It is found in the cytoplasm. In terms of biological role, specifically methylates the N7 position of a guanine in 16S rRNA. This is Ribosomal RNA small subunit methyltransferase G from Dehalococcoides mccartyi (strain CBDB1).